The primary structure comprises 317 residues: SWI/SNF-related matrix-associated actin-dependent regulator of chromatin subfamily E member 1-related (317 aa).

Low complexity predominate over residues 1–17 (MSHGPKQPGAAAAPAGG). The disordered stretch occupies residues 1–71 (MSHGPKQPGA…RKKILPNGPK (71 aa)). Residue lysine 31 forms a Glycyl lysine isopeptide (Lys-Gly) (interchain with G-Cter in SUMO2) linkage. Residues 31–52 (KQERGEGPRAGEKGSHEEEPVK) are compositionally biased toward basic and acidic residues. Over residues 53-65 (KRGWPKGKKRKKI) the composition is skewed to basic residues. Residues 70 to 138 (PKAPVTGYVR…QYMKELRAYQ (69 aa)) constitute a DNA-binding region (HMG box). At serine 160 the chain carries Phosphoserine. Residues 190-257 (EEFLDQNKAR…LQQQLQAVRQ (68 aa)) adopt a coiled-coil conformation.

In terms of assembly, component of a BHC histone deacetylase complex that contains HDAC1, HDAC2, HMG20B/BRAF35, KDM1A, RCOR1/CoREST and PHF21A/BHC80. The BHC complex may also contain ZMYM2, ZNF217, ZMYM3, GSE1 and GTF2I. Interacts with the BRCA2 tumor suppressor protein. Interacts with DTNB. In terms of tissue distribution, ubiquitously expressed in adult tissues.

It localises to the nucleus. The protein localises to the chromosome. Its function is as follows. Required for correct progression through G2 phase of the cell cycle and entry into mitosis. Required for RCOR1/CoREST mediated repression of neuronal specific gene promoters. This chain is SWI/SNF-related matrix-associated actin-dependent regulator of chromatin subfamily E member 1-related (HMG20B), found in Homo sapiens (Human).